The sequence spans 439 residues: MFTPEQFTKVMSQLGNFSQLGQMFQPGNVAMLQALQANGASSTPSLFPAMPSVIPSLAAPSSPTTSNLTADQIVKTCEQLETDGDVDGLFRFMCTIPPQKTQEVAGNEAFLRARALVCFHASHFRELYAILENNKFSPKYHPKLQEMWHEAHYREQEKNRGKSLCAVDKYRVRKKYPMPRTIWDGEQKTHCFKERTRSLLREWYLKDPYPNPPKKKELANATGLTQMQVGNWFKNRRQRDRAAAAKNKQNIIGVELKKTSSDMSDSDDDFEDSMTDSPSPIDEPKDLSKSHIPKLSPTLLPKMATPFDMFAAAANPLMMLNLNPALYMQFHNFFNTMRNPQIDEEENSETTVEVEADIEPPKKRSKLSIDEILNIKSEVSPSQCSPCSNESLSPKRAVKTEEVKKEDDEAAEEDSRSVKSETSEDPKHSSPKSTTSQSE.

The segment at residues 183–243 (WDGEQKTHCF…KNRRQRDRAA (61 aa)) is a DNA-binding region (homeobox). Disordered regions lie at residues 253–293 (GVEL…SHIP), 344–365 (EEEN…KKRS), and 379–439 (VSPS…SQSE). 2 stretches are compositionally biased toward acidic residues: residues 264 to 274 (SDSDDDFEDSM) and 344 to 358 (EEEN…EADI). The span at 379 to 392 (VSPSQCSPCSNESL) shows a compositional bias: polar residues. Positions 398-428 (VKTEEVKKEDDEAAEEDSRSVKSETSEDPKH) are enriched in basic and acidic residues.

It belongs to the SIX/Sine oculis homeobox family. In terms of assembly, interacts with gmn-1. As to expression, expressed in the posterior gonad. Expressed in some cells in the head that are probably neurons. Expressed in the dorsal and ventral neuron RMD pair and the inner labial neuron class IL1. Not expressed in BAG neurons.

It localises to the nucleus. Its function is as follows. Transcription factor which binds a motif with the core sequence 5'-GTATCA-3'. Plays a role in head morphogenesis. Involved in embryonic development. Required for cell specification of the RIA interneurons. May cooperate with the transcription factor vab-3 and phosphatase eya-1 to repress transcription factor ets-5 expression in non BAG neuronal cells. The polypeptide is Homeobox protein ceh-32 (Caenorhabditis elegans).